A 475-amino-acid polypeptide reads, in one-letter code: Adenosylhomocysteinase (475 aa).

Substrate contacts are provided by Thr66, Asp141, and Glu201. 202–204 (TTT) contributes to the NAD(+) binding site. Substrate is bound by residues Lys231 and Asp235. NAD(+) is bound by residues Asn236, 265-270 (GYGEVG), Glu288, Asn323, 344-346 (IGH), and Asn389.

Belongs to the adenosylhomocysteinase family. NAD(+) serves as cofactor.

It is found in the cytoplasm. The catalysed reaction is S-adenosyl-L-homocysteine + H2O = L-homocysteine + adenosine. Its pathway is amino-acid biosynthesis; L-homocysteine biosynthesis; L-homocysteine from S-adenosyl-L-homocysteine: step 1/1. May play a key role in the regulation of the intracellular concentration of adenosylhomocysteine. The chain is Adenosylhomocysteinase from Geobacter sulfurreducens (strain ATCC 51573 / DSM 12127 / PCA).